A 298-amino-acid polypeptide reads, in one-letter code: UDP-N-acetylenolpyruvoylglucosamine reductase (298 aa).

The region spanning 26–190 (RAGGPAERLY…VAAVLDLEPG (165 aa)) is the FAD-binding PCMH-type domain. Residue arginine 170 is part of the active site. Serine 219 acts as the Proton donor in catalysis. The active site involves glutamate 289.

Belongs to the MurB family. The cofactor is FAD.

The protein resides in the cytoplasm. It catalyses the reaction UDP-N-acetyl-alpha-D-muramate + NADP(+) = UDP-N-acetyl-3-O-(1-carboxyvinyl)-alpha-D-glucosamine + NADPH + H(+). It functions in the pathway cell wall biogenesis; peptidoglycan biosynthesis. Cell wall formation. This is UDP-N-acetylenolpyruvoylglucosamine reductase from Alkalilimnicola ehrlichii (strain ATCC BAA-1101 / DSM 17681 / MLHE-1).